The following is a 337-amino-acid chain: Glycine N(alpha)-acyltransferase (337 aa).

The protein belongs to the acetyltransferase family.

The enzyme catalyses a (3R)-hydroxyacyl-[ACP] + glycine = a lyso-glycine lipid + holo-[ACP] + H(+). It catalyses the reaction (3R)-hydroxyhexadecanoyl-[ACP] + glycine = N-[(3R)-3-hydroxyhexadecanoyl]-glycine + holo-[ACP] + H(+). It functions in the pathway lipid metabolism. Is involved in the production of glycine lipids (GL), which are phosphorus-free membrane lipids important for fitness during growth of the human gut bacterium B.thetaiotaomicron in vivo and in vitro. Catalyzes the first step of GL biosynthesis, i.e. the N-acylation of glycine via addition of a 3-hydroxy fatty acyl group, to form a range of monoacylated glycine (also named lyso-glycine lipids or lyso-GL). Is important for the ability of B.thetaiotaomicron to adapt to stress and colonize the mammalian gut. Also seems to be required for the production of flavolipin, an acylated serine-glycine dipeptide. This chain is Glycine N(alpha)-acyltransferase, found in Bacteroides thetaiotaomicron (strain ATCC 29148 / DSM 2079 / JCM 5827 / CCUG 10774 / NCTC 10582 / VPI-5482 / E50).